A 226-amino-acid polypeptide reads, in one-letter code: UPF0758 protein SPJ_1027 (226 aa).

Residues 103-225 (SILSSQKLAK…YFSYREKTDL (123 aa)) enclose the MPN domain. Histidine 174, histidine 176, and aspartate 187 together coordinate Zn(2+). The JAMM motif motif lies at 174 to 187 (HNHPSGAVAPSQND).

It belongs to the UPF0758 family.

The chain is UPF0758 protein SPJ_1027 from Streptococcus pneumoniae (strain JJA).